Consider the following 120-residue polypeptide: Seripauperin-24 (120 aa).

The N-terminal stretch at 1 to 20 (MVKLTSIAAGVAAIAATASA) is a signal peptide.

It belongs to the SRP1/TIP1 family. Seripauperin subfamily. In terms of processing, O-glycosylated.

Its subcellular location is the secreted. The protein localises to the cell wall. In terms of biological role, component of the cell wall. The protein is Seripauperin-24 (PAU24) of Saccharomyces cerevisiae (strain ATCC 204508 / S288c) (Baker's yeast).